We begin with the raw amino-acid sequence, 823 residues long: Valine--tRNA ligase (823 aa).

Position 547 (Lys547) interacts with ATP.

Belongs to the class-I aminoacyl-tRNA synthetase family. ValS type 2 subfamily.

The protein localises to the cytoplasm. The catalysed reaction is tRNA(Val) + L-valine + ATP = L-valyl-tRNA(Val) + AMP + diphosphate. Catalyzes the attachment of valine to tRNA(Val). As ValRS can inadvertently accommodate and process structurally similar amino acids such as threonine, to avoid such errors, it has a 'posttransfer' editing activity that hydrolyzes mischarged Thr-tRNA(Val) in a tRNA-dependent manner. This is Valine--tRNA ligase (valS) from Aeropyrum pernix (strain ATCC 700893 / DSM 11879 / JCM 9820 / NBRC 100138 / K1).